Consider the following 161-residue polypeptide: Regulator of ribonuclease activity A (161 aa).

The protein belongs to the RraA family. Homotrimer. Binds to both RNA-binding sites in the C-terminal region of Rne and to RhlB.

It is found in the cytoplasm. In terms of biological role, globally modulates RNA abundance by binding to RNase E (Rne) and regulating its endonucleolytic activity. Can modulate Rne action in a substrate-dependent manner by altering the composition of the degradosome. Modulates RNA-binding and helicase activities of the degradosome. The polypeptide is Regulator of ribonuclease activity A (Shewanella denitrificans (strain OS217 / ATCC BAA-1090 / DSM 15013)).